The following is a 462-amino-acid chain: Bifunctional protein GlmU (462 aa).

The segment at 1-230 (MVNKNAIILA…FEESMGVNDR (230 aa)) is pyrophosphorylase. Residues 9-12 (LAAG), Lys23, Gln73, 78-79 (GT), 101-103 (SGD), Gly140, Glu155, Asn170, and Asn228 contribute to the UDP-N-acetyl-alpha-D-glucosamine site. A Mg(2+)-binding site is contributed by Asp103. A Mg(2+)-binding site is contributed by Asn228. The tract at residues 231 to 251 (VALSQATKVMRQRINTAHMRN) is linker. An N-acetyltransferase region spans residues 252–462 (GVTLIDPEST…LPVAKDEEWQ (211 aa)). UDP-N-acetyl-alpha-D-glucosamine is bound by residues Arg333 and Lys351. Catalysis depends on His363, which acts as the Proton acceptor. Residues Tyr366 and Asn377 each coordinate UDP-N-acetyl-alpha-D-glucosamine. Residues 386–387 (NY), Ser405, Ala423, and Arg440 contribute to the acetyl-CoA site.

The protein in the N-terminal section; belongs to the N-acetylglucosamine-1-phosphate uridyltransferase family. In the C-terminal section; belongs to the transferase hexapeptide repeat family. Homotrimer. Mg(2+) is required as a cofactor.

The protein localises to the cytoplasm. It carries out the reaction alpha-D-glucosamine 1-phosphate + acetyl-CoA = N-acetyl-alpha-D-glucosamine 1-phosphate + CoA + H(+). The enzyme catalyses N-acetyl-alpha-D-glucosamine 1-phosphate + UTP + H(+) = UDP-N-acetyl-alpha-D-glucosamine + diphosphate. Its pathway is nucleotide-sugar biosynthesis; UDP-N-acetyl-alpha-D-glucosamine biosynthesis; N-acetyl-alpha-D-glucosamine 1-phosphate from alpha-D-glucosamine 6-phosphate (route II): step 2/2. It participates in nucleotide-sugar biosynthesis; UDP-N-acetyl-alpha-D-glucosamine biosynthesis; UDP-N-acetyl-alpha-D-glucosamine from N-acetyl-alpha-D-glucosamine 1-phosphate: step 1/1. It functions in the pathway bacterial outer membrane biogenesis; LPS lipid A biosynthesis. Catalyzes the last two sequential reactions in the de novo biosynthetic pathway for UDP-N-acetylglucosamine (UDP-GlcNAc). The C-terminal domain catalyzes the transfer of acetyl group from acetyl coenzyme A to glucosamine-1-phosphate (GlcN-1-P) to produce N-acetylglucosamine-1-phosphate (GlcNAc-1-P), which is converted into UDP-GlcNAc by the transfer of uridine 5-monophosphate (from uridine 5-triphosphate), a reaction catalyzed by the N-terminal domain. The protein is Bifunctional protein GlmU of Latilactobacillus sakei subsp. sakei (strain 23K) (Lactobacillus sakei subsp. sakei).